The chain runs to 155 residues: Ribonuclease H (155 aa).

Residues 1–142 (MLKQVEIFTD…CDELARAAAM (142 aa)) form the RNase H type-1 domain. The Mg(2+) site is built by aspartate 10, glutamate 48, aspartate 70, and aspartate 134.

Belongs to the RNase H family. Monomer. Requires Mg(2+) as cofactor.

The protein resides in the cytoplasm. It catalyses the reaction Endonucleolytic cleavage to 5'-phosphomonoester.. Endonuclease that specifically degrades the RNA of RNA-DNA hybrids. This Salmonella paratyphi A (strain AKU_12601) protein is Ribonuclease H.